Reading from the N-terminus, the 88-residue chain is UPF0250 protein IL0958 (88 aa).

Belongs to the UPF0250 family.

The sequence is that of UPF0250 protein IL0958 from Idiomarina loihiensis (strain ATCC BAA-735 / DSM 15497 / L2-TR).